Reading from the N-terminus, the 353-residue chain is Peroxisome assembly protein 12-A (353 aa).

At 1 to 19 (MAERGAHITTTSASDDRPS) the chain is on the peroxisomal matrix side. A helical transmembrane segment spans residues 20-47 (IFEVVAQESLMAAARPALHHIVKVLAES). Residues 48-51 (NPSR) lie on the Cytoplasmic side of the membrane. The helical transmembrane segment at 52–76 (YGTLWRWFDELYTLLDWLLQQHYLS) threads the bilayer. Topologically, residues 77–104 (WASASFSENFYGLKRITLGKEVGQRNLP) are peroxisomal matrix. A helical membrane pass occupies residues 105–134 (RKEYWKSLLLLVLIPYLRVKLEKIVNRLRE). Residues 135–139 (EQDYS) are Cytoplasmic-facing. A helical membrane pass occupies residues 140–178 (IQNPTSFHKRCYKAILASYPFVKLGWEAWFLFYQLRYIL). The Peroxisomal matrix segment spans residues 179-243 (WNGKNHSPLL…LGAVALSVSS (65 aa)). A helical membrane pass occupies residues 244–271 (SLSLGVFFLQFLDWWYSAENQETLKSLN). Residues 272 to 353 (NLPVPPPPIH…HLIKLYTPDG (82 aa)) lie on the Cytoplasmic side of the membrane. Cys298, Cys301, Cys319, and Cys322 together coordinate Zn(2+). An RING-type; degenerate zinc finger spans residues 298–337 (CPLCRKVRVNDTALGTSGYVFCYRCAYYYVKTHQRCPVSG).

This sequence belongs to the pex2/pex10/pex12 family. Component of the PEX2-PEX10-PEX12 retrotranslocation channel.

It is found in the peroxisome membrane. It participates in protein modification; protein ubiquitination. Functionally, component of a retrotranslocation channel required for peroxisome organization by mediating export of the PEX5 receptor from peroxisomes to the cytosol, thereby promoting PEX5 recycling. The retrotranslocation channel is composed of PEX2, PEX10 and PEX12; each subunit contributing transmembrane segments that coassemble into an open channel that specifically allows the passage of PEX5 through the peroxisomal membrane. PEX12 also regulates PEX5 recycling by activating the E3 ubiquitin-protein ligase activity of PEX10. When PEX5 recycling is compromised, PEX12 stimulates PEX10-mediated polyubiquitination of PEX5, leading to its subsequent degradation. The polypeptide is Peroxisome assembly protein 12-A (Xenopus laevis (African clawed frog)).